A 447-amino-acid chain; its full sequence is Probable glycine dehydrogenase (decarboxylating) subunit 1 (447 aa).

The protein belongs to the GcvP family. N-terminal subunit subfamily. In terms of assembly, the glycine cleavage system is composed of four proteins: P, T, L and H. In this organism, the P 'protein' is a heterodimer of two subunits.

It catalyses the reaction N(6)-[(R)-lipoyl]-L-lysyl-[glycine-cleavage complex H protein] + glycine + H(+) = N(6)-[(R)-S(8)-aminomethyldihydrolipoyl]-L-lysyl-[glycine-cleavage complex H protein] + CO2. In terms of biological role, the glycine cleavage system catalyzes the degradation of glycine. The P protein binds the alpha-amino group of glycine through its pyridoxal phosphate cofactor; CO(2) is released and the remaining methylamine moiety is then transferred to the lipoamide cofactor of the H protein. This is Probable glycine dehydrogenase (decarboxylating) subunit 1 from Bacillus cereus (strain G9842).